A 374-amino-acid polypeptide reads, in one-letter code: MSGLGFTGVVRIAVMALLALAFLGAPAHATSRIKDLANIEGVRQNQLIGYGLVVGLNGTGDTLNNIPFTKQSLQAMLERMGVNIRGATIRTGNVAAVMVTGNLPAFATQGTRMDVTVSAMGDARSLQGGTLLVTPLLGADGNVYAVAQGSLAIGGFSAEGAAASVTKGVPTNGRIANGAIVEREIEFALNRMPNVRLALRNGDFTTAKRIAAAVNDFLGTKTAEPIDPSTVQLSIPAEFRGNVVALLTEIEQLQVEPDITAKIIIDERSGIIVMGRDVRVATVAVAQGNLTVSISESPQVSQPNPLSNGRTVMTPRTDVGVTENGNKLALVKNGVSLQELVDGLNGLGIGPRDLIGILQAIKAAGAIEADIEVM.

The signal sequence occupies residues 1-29 (MSGLGFTGVVRIAVMALLALAFLGAPAHA). Polar residues predominate over residues 296 to 311 (ESPQVSQPNPLSNGRT). The interval 296–316 (ESPQVSQPNPLSNGRTVMTPR) is disordered.

The protein belongs to the FlgI family. In terms of assembly, the basal body constitutes a major portion of the flagellar organelle and consists of four rings (L,P,S, and M) mounted on a central rod.

The protein localises to the periplasm. It is found in the bacterial flagellum basal body. In terms of biological role, assembles around the rod to form the L-ring and probably protects the motor/basal body from shearing forces during rotation. This chain is Flagellar P-ring protein, found in Nitrobacter winogradskyi (strain ATCC 25391 / DSM 10237 / CIP 104748 / NCIMB 11846 / Nb-255).